The following is a 373-amino-acid chain: Leucine-, isoleucine-, valine-, threonine-, and alanine-binding protein (373 aa).

The N-terminal stretch at 1–26 is a signal peptide; it reads MKKGTQRLSRLFAAMAIAGFASYSMA. A disulfide bridge connects residues cysteine 80 and cysteine 105.

Belongs to the leucine-binding protein family.

It localises to the periplasm. Component of the high-affinity leucine, isoleucine, valine transport system I (LIV-I), which is operative without Na(+) and is specific for alanine and threonine, in addition to branched-chain amino acids. Binds L-leucine, L-isoleucine, L-valine, L-threonine and L-alanine with nanomolar affinities. Can also bind L-homoserine with high affinity. The sequence is that of Leucine-, isoleucine-, valine-, threonine-, and alanine-binding protein (braC) from Pseudomonas aeruginosa (strain ATCC 15692 / DSM 22644 / CIP 104116 / JCM 14847 / LMG 12228 / 1C / PRS 101 / PAO1).